The following is a 340-amino-acid chain: Deubiquitinase SseL (340 aa).

His-223 is a catalytic residue. The active-site Nucleophile is Cys-285.

It belongs to the peptidase C79 family.

The protein localises to the secreted. It is found in the host cytoplasm. Effector proteins function to alter host cell physiology and promote bacterial survival in host tissues. This protease targets the host cell ubiquitin pathway by acting as a deubiquitinase in infected host cells. The sequence is that of Deubiquitinase SseL (sseL) from Salmonella choleraesuis (strain SC-B67).